Consider the following 786-residue polypeptide: Endonuclease MutS2 (786 aa).

Position 332 to 339 (332 to 339 (GPNTGGKT)) interacts with ATP. The Smr domain occupies 711–786 (VDLRGMDSIE…GTGVTIVELK (76 aa)).

It belongs to the DNA mismatch repair MutS family. MutS2 subfamily. Homodimer. Binds to stalled ribosomes, contacting rRNA.

In terms of biological role, endonuclease that is involved in the suppression of homologous recombination and thus may have a key role in the control of bacterial genetic diversity. Acts as a ribosome collision sensor, splitting the ribosome into its 2 subunits. Detects stalled/collided 70S ribosomes which it binds and splits by an ATP-hydrolysis driven conformational change. Acts upstream of the ribosome quality control system (RQC), a ribosome-associated complex that mediates the extraction of incompletely synthesized nascent chains from stalled ribosomes and their subsequent degradation. Probably generates substrates for RQC. This is Endonuclease MutS2 from Clostridium kluyveri (strain NBRC 12016).